We begin with the raw amino-acid sequence, 387 residues long: Phosphoglycerate kinase (387 aa).

Substrate is bound by residues 21–23 (DLN), Arg-36, 59–62 (HLGR), Arg-113, and Arg-146. Residues Lys-197, Glu-314, and 340–343 (GGDT) each bind ATP.

Belongs to the phosphoglycerate kinase family. Monomer.

The protein localises to the cytoplasm. It catalyses the reaction (2R)-3-phosphoglycerate + ATP = (2R)-3-phospho-glyceroyl phosphate + ADP. It participates in carbohydrate degradation; glycolysis; pyruvate from D-glyceraldehyde 3-phosphate: step 2/5. The polypeptide is Phosphoglycerate kinase (pgk) (Pasteurella multocida (strain Pm70)).